Here is a 169-residue protein sequence, read N- to C-terminus: Large ribosomal subunit protein uL5 (169 aa).

It belongs to the universal ribosomal protein uL5 family. In terms of assembly, part of the 50S ribosomal subunit; contacts the 5S rRNA and probably tRNA. Forms a bridge to the 30S subunit in the 70S ribosome.

Functionally, this is one of the proteins that bind and probably mediate the attachment of the 5S RNA into the large ribosomal subunit, where it forms part of the central protuberance. In the 70S ribosome it contacts protein S13 of the 30S subunit (bridge B1b), connecting the 2 subunits; this bridge is implicated in subunit movement. May contact the P site tRNA; the 5S rRNA and some of its associated proteins might help stabilize positioning of ribosome-bound tRNAs. This chain is Large ribosomal subunit protein uL5, found in Methanococcoides burtonii (strain DSM 6242 / NBRC 107633 / OCM 468 / ACE-M).